Consider the following 318-residue polypeptide: Thioredoxin reductase (318 aa).

Residue 36–43 coordinates FAD; the sequence is TGLQQGGQ. The cysteines at positions 136 and 139 are disulfide-linked. 286-295 contributes to the FAD binding site; the sequence is DVMDHNYRQA.

The protein belongs to the class-II pyridine nucleotide-disulfide oxidoreductase family. In terms of assembly, homodimer. FAD serves as cofactor.

The protein localises to the cytoplasm. The catalysed reaction is [thioredoxin]-dithiol + NADP(+) = [thioredoxin]-disulfide + NADPH + H(+). The protein is Thioredoxin reductase (trxB) of Haemophilus influenzae (strain ATCC 51907 / DSM 11121 / KW20 / Rd).